The primary structure comprises 283 residues: Plasma membrane ascorbate-dependent reductase CYBRD1 (283 aa).

Residues 1 to 5 (MEGYK) lie on the Cytoplasmic side of the membrane. The helical transmembrane segment at 6-30 (SFLAFLVSSLLLGFLGVIFTLVWVL) threads the bilayer. One can recognise a Cytochrome b561 domain in the interval 13-218 (SSLLLGFLGV…FGGLVVWMVT (206 aa)). Over 31–45 (HWREGLGWDGGAAEF) the chain is Extracellular. The chain crosses the membrane as a helical span at residues 46–67 (NWHPVLVTSGFIFIQGIAIIVY). 3 residues coordinate heme b: His-48, Arg-68, and Lys-77. The Cytoplasmic segment spans residues 68 to 76 (RLPWTWKCS). L-ascorbate is bound by residues Lys-77 and Lys-81. A helical membrane pass occupies residues 77 to 103 (KLLMKFIHAGLHLTALIFTIVALVAVF). A heme b-binding site is contributed by His-84. Topologically, residues 104 to 116 (DFHNAKNIPNMYS) are extracellular. Residue His-106 coordinates Fe(3+). Residues 113–116 (NMYS) and His-118 contribute to the heme b site. Residues 117-142 (LHSWIGLTVVILYALQLVLGVSIYLL) traverse the membrane as a helical segment. The Cytoplasmic segment spans residues 143–149 (PFASNTL). Position 150 (Arg-150) interacts with L-ascorbate. The helical transmembrane segment at 150–177 (RAALMPVHVYSGLFIFGTVIATALMGIT) threads the bilayer. 2 residues coordinate heme b: His-157 and Glu-178. Residues 178–195 (EKLIFSLKEPPYSKLPPE) lie on the Extracellular side of the membrane. A helical membrane pass occupies residues 196 to 220 (AIFVNTFGLLILVFGGLVVWMVTTP). Residues 221–283 (AWKRPREQGM…LDEAGQRSTM (63 aa)) are Cytoplasmic-facing. Heme b is bound at residue Lys-223. Positions 234-262 (SPTVSSPDETEEGSTITDCSNTEKSDVEL) are disordered. The span at 235-253 (PTVSSPDETEEGSTITDCS) shows a compositional bias: polar residues.

In terms of assembly, homodimer. Heme b serves as cofactor.

The protein localises to the cell membrane. The protein resides in the apical cell membrane. The catalysed reaction is Fe(3+)(out) + L-ascorbate(in) = monodehydro-L-ascorbate radical(in) + Fe(2+)(out) + H(+). It carries out the reaction Cu(2+)(out) + L-ascorbate(in) = Cu(+)(out) + monodehydro-L-ascorbate radical(in) + H(+). The enzyme catalyses monodehydro-L-ascorbate radical(out) + L-ascorbate(in) = monodehydro-L-ascorbate radical(in) + L-ascorbate(out). Its function is as follows. Plasma membrane reductase that uses cytoplasmic ascorbate as an electron donor to reduce extracellular Fe(3+) into Fe(2+). It is also able to reduce extracellular monodehydro-L-ascorbate and may be involved in extracellular ascorbate regeneration. May also function as a cupric transmembrane reductase. The sequence is that of Plasma membrane ascorbate-dependent reductase CYBRD1 (cybrd1) from Xenopus laevis (African clawed frog).